The primary structure comprises 618 residues: D-glucuronyl C5-epimerase (618 aa).

Residues 1 to 11 are Cytoplasmic-facing; the sequence is MRCLAARVNYK. A helical; Signal-anchor for type II membrane protein membrane pass occupies residues 12–29; it reads TLIIICALFTLVTVLLWN. At 30–618 the chain is on the lumenal side; it reads KCSSDKAIQF…YLKGSRAKHN (589 aa). Substrate is bound by residues tyrosine 180, 185-187, glutamine 202, tyrosine 210, glutamine 213, and glutamine 216; that span reads RDR. The Ca(2+) site is built by threonine 238, glutamate 240, threonine 269, asparagine 270, and aspartate 393. Substrate is bound by residues 430–433, 500–501, asparagine 511, tyrosine 515, tyrosine 561, arginine 564, and 573–582; these read KLGE, EY, and NLARWDYHTT.

It belongs to the D-glucuronyl C5-epimerase family. As to quaternary structure, homodimer. Interacts with HS2ST1. As to expression, widely expressed with highest levels in lung and lowest levels in spleen.

It localises to the golgi apparatus membrane. It catalyses the reaction [heparosan-N-sulfate](n) = [heparan-N-sulfate](n). It participates in glycan metabolism; heparan sulfate biosynthesis. The protein operates within glycan metabolism; heparin biosynthesis. Functionally, converts D-glucuronic acid residues adjacent to N-sulfate sugar residues to L-iduronic acid residues, both in maturing heparan sulfate (HS) and heparin chains. This is important for further modifications that determine the specificity of interactions between these glycosaminoglycans and proteins. The chain is D-glucuronyl C5-epimerase (Glce) from Mus musculus (Mouse).